The sequence spans 667 residues: DNA ligase (667 aa).

NAD(+)-binding positions include 32–36 (DSVYD), 81–82 (SL), and glutamate 111. Residue lysine 113 is the N6-AMP-lysine intermediate of the active site. Positions 134, 168, 285, and 309 each coordinate NAD(+). Zn(2+) contacts are provided by cysteine 403, cysteine 406, cysteine 421, and cysteine 426. Positions 588–667 (VGDNPFAGKT…DNLIEQLNLI (80 aa)) constitute a BRCT domain.

The protein belongs to the NAD-dependent DNA ligase family. LigA subfamily. It depends on Mg(2+) as a cofactor. The cofactor is Mn(2+).

It carries out the reaction NAD(+) + (deoxyribonucleotide)n-3'-hydroxyl + 5'-phospho-(deoxyribonucleotide)m = (deoxyribonucleotide)n+m + AMP + beta-nicotinamide D-nucleotide.. DNA ligase that catalyzes the formation of phosphodiester linkages between 5'-phosphoryl and 3'-hydroxyl groups in double-stranded DNA using NAD as a coenzyme and as the energy source for the reaction. It is essential for DNA replication and repair of damaged DNA. The polypeptide is DNA ligase (Lysinibacillus sphaericus (strain C3-41)).